We begin with the raw amino-acid sequence, 341 residues long: MEEKFRNLIEVWISALISLSYCYYISSKLSKGVLRLLSILPVCILFLVLPLFLSCVHFCAISVLFLSWLANFKLLLFAFDEGPLFPLPPKLSRFICFACLPIKIRQDPSPNAIPNLHPKPMPKWVLAVKILVLGVLLHVYEYRDGLPRFVVLALYCLHIYLEVELVLVFVGAVVSTLLGCNIEPVFNEPYLATSLQDFWSRRWNLMVSAVLRSTVHIPVQRFFKRILSPDGAMFAGVMASFFVSGLMHELLYFYMIRKPPTWEVTCFFVLHGAATATEIAVKRTQWLRPPHRAVSGLVVLTFVSVTGVWLFLAQVLRNNVHEKAIGECLLVLDLAKLFTSS.

The next 8 helical transmembrane spans lie at 7–27 (NLIE…YISS), 36–56 (LLSI…LSCV), 58–78 (FCAI…LLFA), 120–140 (PMPK…LHVY), 149–169 (FVVL…VLVF), 233–253 (MFAG…LLYF), 261–281 (TWEV…EIAV), and 293–313 (AVSG…LFLA).

It belongs to the wax synthase family.

It is found in the membrane. The enzyme catalyses a long chain fatty alcohol + a fatty acyl-CoA = a wax ester + CoA. Its function is as follows. Catalyzes the final step in the synthesis of long-chain linear esters (waxes). The chain is Probable long-chain-alcohol O-fatty-acyltransferase 1 (AT1) from Arabidopsis thaliana (Mouse-ear cress).